The following is a 368-amino-acid chain: F-box only protein 28 (368 aa).

Positions 1 to 11 are enriched in basic and acidic residues; the sequence is MAAASEERMAE. The disordered stretch occupies residues 1–56; that stretch reads MAAASEERMAEEGGGGHGDGGSCSAAGSAQRQPPAPPSQAPPPGSQAPAAPALAPD. Residues 12–21 show a composition bias toward gly residues; it reads EGGGGHGDGG. The span at 22-32 shows a compositional bias: low complexity; it reads SCSAAGSAQRQ. The span at 33–45 shows a compositional bias: pro residues; the sequence is PPAPPSQAPPPGS. Residues 46 to 55 are compositionally biased toward low complexity; that stretch reads QAPAAPALAP. The region spanning 61–109 is the F-box domain; that stretch reads NNTLVALPIVAIENILSFMSYDEISQLRLVCKRMDLVCQRMLNQGFLKV. Serine 235 and serine 242 each carry phosphoserine. A Phosphothreonine modification is found at threonine 270. Residues 328-368 form a disordered region; it reads MESAVGTSSGSGQSEESPRKRRKATEAIDSLRKSKRLRNRK. Serine 344 carries the phosphoserine modification.

As to quaternary structure, part of a SCF (SKP1-cullin-F-box) protein ligase complex.

The protein resides in the chromosome. Its subcellular location is the centromere. It is found in the kinetochore. Probably recognizes and binds to some phosphorylated proteins and promotes their ubiquitination and degradation. In Mus musculus (Mouse), this protein is F-box only protein 28 (Fbxo28).